Reading from the N-terminus, the 183-residue chain is Protein Dr1 (183 aa).

The region spanning 19–82 (TLPRASINKI…INAEHVLEAL (64 aa)) is the Histone-fold domain. The segment at 92-183 (QEAEAVLHDC…DDDDDDDDDY (92 aa)) is repression of TATA-containing promoters. The interval 155–183 (AMVQRPPLADGSVASKPSEDDDDDDDDDY) is disordered. Residues 173–183 (EDDDDDDDDDY) show a composition bias toward acidic residues.

Belongs to the NC2 beta/DR1 family. Component of the Ada2a-containing (ATAC) complex composed of at least Ada2a, Atac1, Hcf, Ada3, Gcn5, Mocs2B, Charac-14, Atac3, Atac2, NC2beta and wds. Homodimer. Interacts with NC2-alpha/Drap1 to form the dNC2 complex.

Its subcellular location is the nucleus. Its function is as follows. Bifunctional basic transcription factor. Activates transcription of DPE (Downstream Promoter Element) containing promoters while repressing transcription of promoters which contain TATA elements. Together with Chrac-14, promotes nucleosome sliding of ATP-dependent nucleosome remodeling complexes. The polypeptide is Protein Dr1 (NC2beta) (Drosophila melanogaster (Fruit fly)).